A 592-amino-acid polypeptide reads, in one-letter code: Aspartate--tRNA ligase (592 aa).

Residue E176 participates in L-aspartate binding. The tract at residues 200–203 is aspartate; the sequence is QIFK. R222 provides a ligand contact to L-aspartate. Residues 222–224 and Q231 contribute to the ATP site; that span reads RDE. H450 serves as a coordination point for L-aspartate. E484 lines the ATP pocket. Position 491 (R491) interacts with L-aspartate. 536 to 539 provides a ligand contact to ATP; that stretch reads GLDR.

This sequence belongs to the class-II aminoacyl-tRNA synthetase family. Type 1 subfamily. As to quaternary structure, homodimer.

The protein resides in the cytoplasm. It carries out the reaction tRNA(Asp) + L-aspartate + ATP = L-aspartyl-tRNA(Asp) + AMP + diphosphate. Functionally, catalyzes the attachment of L-aspartate to tRNA(Asp) in a two-step reaction: L-aspartate is first activated by ATP to form Asp-AMP and then transferred to the acceptor end of tRNA(Asp). The protein is Aspartate--tRNA ligase of Macrococcus caseolyticus (strain JCSC5402) (Macrococcoides caseolyticum).